A 287-amino-acid chain; its full sequence is Cell division protein ZipA (287 aa).

A topological domain (periplasmic) is located at residue methionine 1. The chain crosses the membrane as a helical span at residues 2-22 (EIGLREWLIVIGIIVIAGILF). At 23 to 287 (DGWRRMRGSK…ERRALTQRRG (265 aa)) the chain is on the cytoplasmic side. Positions 48 to 140 (DEEETTSAEV…PTQRITEDKD (93 aa)) are disordered. Composition is skewed to basic and acidic residues over residues 64 to 77 (LDTH…EHDL), 85 to 104 (REGK…KDEP), and 121 to 140 (GRDD…EDKD).

This sequence belongs to the ZipA family. Interacts with FtsZ via their C-terminal domains.

It is found in the cell inner membrane. Its function is as follows. Essential cell division protein that stabilizes the FtsZ protofilaments by cross-linking them and that serves as a cytoplasmic membrane anchor for the Z ring. Also required for the recruitment to the septal ring of downstream cell division proteins. The polypeptide is Cell division protein ZipA (Pseudomonas syringae pv. syringae (strain B728a)).